The primary structure comprises 638 residues: 1-deoxy-D-xylulose-5-phosphate synthase (638 aa).

Residues His-79 and Ala-120–Ser-122 contribute to the thiamine diphosphate site. Mg(2+) is bound at residue Asp-151. Residues Gly-152–Ala-153, Asn-180, Tyr-289, and Glu-371 contribute to the thiamine diphosphate site. Mg(2+) is bound at residue Asn-180.

The protein belongs to the transketolase family. DXPS subfamily. As to quaternary structure, homodimer. It depends on Mg(2+) as a cofactor. The cofactor is thiamine diphosphate.

It carries out the reaction D-glyceraldehyde 3-phosphate + pyruvate + H(+) = 1-deoxy-D-xylulose 5-phosphate + CO2. Its pathway is metabolic intermediate biosynthesis; 1-deoxy-D-xylulose 5-phosphate biosynthesis; 1-deoxy-D-xylulose 5-phosphate from D-glyceraldehyde 3-phosphate and pyruvate: step 1/1. Functionally, catalyzes the acyloin condensation reaction between C atoms 2 and 3 of pyruvate and glyceraldehyde 3-phosphate to yield 1-deoxy-D-xylulose-5-phosphate (DXP). The polypeptide is 1-deoxy-D-xylulose-5-phosphate synthase (Rhizobium rhizogenes (strain K84 / ATCC BAA-868) (Agrobacterium radiobacter)).